Here is a 1288-residue protein sequence, read N- to C-terminus: 5-oxoprolinase (1288 aa).

Residue Thr151 is modified to Phosphothreonine. The interval 1248–1272 (PGGGGYGDPEDPAPPPGSPPQALAF) is disordered. Residue Ser1265 is modified to Phosphoserine.

It belongs to the oxoprolinase family. As to quaternary structure, homodimer.

Its subcellular location is the cytoplasm. The protein resides in the cytosol. The catalysed reaction is 5-oxo-L-proline + ATP + 2 H2O = L-glutamate + ADP + phosphate + H(+). Catalyzes the cleavage of 5-oxo-L-proline to form L-glutamate coupled to the hydrolysis of ATP to ADP and inorganic phosphate. The sequence is that of 5-oxoprolinase from Homo sapiens (Human).